The chain runs to 414 residues: Hydroxysqualene dehydroxylase (414 aa).

This sequence belongs to the HpnE family.

It carries out the reaction squalene + FAD + H2O + H(+) = hydroxysqualene + FADH2. It functions in the pathway secondary metabolite biosynthesis; hopanoid biosynthesis. Involved in the biosynthesis of the hopanoid precursor squalene (SQ) from farnesyl diphosphate (FPP). Catalyzes the third (last) step, the reduction of hydroxysqualene (HSQ) to SQ. The polypeptide is Hydroxysqualene dehydroxylase (Zymomonas mobilis subsp. mobilis (strain ATCC 31821 / ZM4 / CP4)).